The sequence spans 283 residues: Putative sugar uptake protein BA_0200/GBAA_0200/BAS0200 (283 aa).

10 consecutive transmembrane segments (helical) span residues 4–21 (LLAL…LVSV), 26–48 (GAYS…MYVF), 52–71 (ALTM…WALG), 84–106 (VSTT…GVIA), 110–132 (WTTT…GVVF), 151–173 (LLTL…WYNI), 178–195 (AILP…VLTS), 208–230 (ALSG…RVGV), 234–253 (FPLS…VFLG), and 260–279 (QLIF…VLLG).

This sequence belongs to the GRP transporter (TC 2.A.7.5) family.

It is found in the cell membrane. The protein is Putative sugar uptake protein BA_0200/GBAA_0200/BAS0200 of Bacillus anthracis.